A 303-amino-acid chain; its full sequence is D-alanine--D-alanine ligase (303 aa).

The region spanning 104–300 is the ATP-grasp domain; it reads KLLWNAVGLP…FEKLVERVLE (197 aa). 132-187 lines the ATP pocket; it reads IAKLSLPVFVKPSSEGSSVGVFKVKTKEELLPAITAALEFDTIVLVEEFLTGAEYS. Positions 254, 267, and 269 each coordinate Mg(2+).

Belongs to the D-alanine--D-alanine ligase family. The cofactor is Mg(2+). Requires Mn(2+) as cofactor.

Its subcellular location is the cytoplasm. It carries out the reaction 2 D-alanine + ATP = D-alanyl-D-alanine + ADP + phosphate + H(+). It participates in cell wall biogenesis; peptidoglycan biosynthesis. Functionally, cell wall formation. This chain is D-alanine--D-alanine ligase, found in Haemophilus ducreyi (strain 35000HP / ATCC 700724).